We begin with the raw amino-acid sequence, 409 residues long: U-box domain-containing protein 28 (409 aa).

One can recognise a U-box domain in the interval 10-84 (TVPCFFKCPI…DHWSDSINRR (75 aa)). 3 ARM repeats span residues 178–218 (RLSN…FIAV), 219–261 (DAES…AIAS), and 263–304 (KRVK…AISS).

The catalysed reaction is S-ubiquitinyl-[E2 ubiquitin-conjugating enzyme]-L-cysteine + [acceptor protein]-L-lysine = [E2 ubiquitin-conjugating enzyme]-L-cysteine + N(6)-ubiquitinyl-[acceptor protein]-L-lysine.. It participates in protein modification; protein ubiquitination. Functionally, functions as an E3 ubiquitin ligase. The protein is U-box domain-containing protein 28 (PUB28) of Arabidopsis thaliana (Mouse-ear cress).